The chain runs to 689 residues: Glycine--tRNA ligase beta subunit (689 aa).

It belongs to the class-II aminoacyl-tRNA synthetase family. In terms of assembly, tetramer of two alpha and two beta subunits.

It is found in the cytoplasm. The enzyme catalyses tRNA(Gly) + glycine + ATP = glycyl-tRNA(Gly) + AMP + diphosphate. The polypeptide is Glycine--tRNA ligase beta subunit (Lacticaseibacillus casei (strain BL23) (Lactobacillus casei)).